The primary structure comprises 368 residues: ATP-dependent (S)-NAD(P)H-hydrate dehydratase (368 aa).

Positions 13-357 constitute a YjeF C-terminal domain; that stretch reads LFKKVRKIVP…DEVHESFLEL (345 aa). (6S)-NADPHX contacts are provided by residues G125 and 178–184; that span reads NVNEFSR. ATP is bound by residues 231 to 235 and 250 to 259; these read KGPHD and GGLKRSGGQG. D260 contacts (6S)-NADPHX.

The protein belongs to the NnrD/CARKD family. Mg(2+) is required as a cofactor.

It is found in the cytoplasm. It catalyses the reaction (6S)-NADHX + ATP = ADP + phosphate + NADH + H(+). The catalysed reaction is (6S)-NADPHX + ATP = ADP + phosphate + NADPH + H(+). Catalyzes the dehydration of the S-form of NAD(P)HX at the expense of ATP, which is converted to ADP. Together with NAD(P)HX epimerase, which catalyzes the epimerization of the S- and R-forms, the enzyme allows the repair of both epimers of NAD(P)HX, a damaged form of NAD(P)H that is a result of enzymatic or heat-dependent hydration. The polypeptide is ATP-dependent (S)-NAD(P)H-hydrate dehydratase (Aspergillus fumigatus (strain ATCC MYA-4609 / CBS 101355 / FGSC A1100 / Af293) (Neosartorya fumigata)).